Consider the following 74-residue polypeptide: Large ribosomal subunit protein eL38B (74 aa).

This sequence belongs to the eukaryotic ribosomal protein eL38 family. In terms of assembly, component of the large ribosomal subunit (LSU). Mature yeast ribosomes consist of a small (40S) and a large (60S) subunit. The 40S small subunit contains 1 molecule of ribosomal RNA (18S rRNA) and at least 33 different proteins. The large 60S subunit contains 3 rRNA molecules (25S, 5.8S and 5S rRNA) and at least 46 different proteins.

The protein localises to the cytoplasm. Functionally, component of the ribosome, a large ribonucleoprotein complex responsible for the synthesis of proteins in the cell. The small ribosomal subunit (SSU) binds messenger RNAs (mRNAs) and translates the encoded message by selecting cognate aminoacyl-transfer RNA (tRNA) molecules. The large subunit (LSU) contains the ribosomal catalytic site termed the peptidyl transferase center (PTC), which catalyzes the formation of peptide bonds, thereby polymerizing the amino acids delivered by tRNAs into a polypeptide chain. The nascent polypeptides leave the ribosome through a tunnel in the LSU and interact with protein factors that function in enzymatic processing, targeting, and the membrane insertion of nascent chains at the exit of the ribosomal tunnel. The polypeptide is Large ribosomal subunit protein eL38B (rpl3802) (Schizosaccharomyces pombe (strain 972 / ATCC 24843) (Fission yeast)).